Consider the following 282-residue polypeptide: Undecaprenyl-diphosphatase (282 aa).

8 consecutive transmembrane segments (helical) span residues 7-29, 45-65, 89-109, 115-135, 153-173, 196-216, 229-249, and 258-278; these read VLFA…HVVI, FLPF…LYFW, GLLL…FALK, LFAS…VLII, LTLR…LPGL, FAFL…VPHL, TALL…AFLM, and WALG…LILI.

It belongs to the UppP family.

The protein localises to the cell inner membrane. It catalyses the reaction di-trans,octa-cis-undecaprenyl diphosphate + H2O = di-trans,octa-cis-undecaprenyl phosphate + phosphate + H(+). Catalyzes the dephosphorylation of undecaprenyl diphosphate (UPP). Confers resistance to bacitracin. The chain is Undecaprenyl-diphosphatase from Acidiphilium cryptum (strain JF-5).